The primary structure comprises 667 residues: DNA ligase (667 aa).

NAD(+)-binding positions include 32 to 36, 81 to 82, and E110; these read DSEYD and SL. The active-site N6-AMP-lysine intermediate is the K112. Residues R133, E167, K283, and K307 each contribute to the NAD(+) site. Residues C401, C404, C419, and C424 each contribute to the Zn(2+) site. Residues 586–667 form the BRCT domain; that stretch reads EGHPEFSGKT…FVDKQNELNS (82 aa).

This sequence belongs to the NAD-dependent DNA ligase family. LigA subfamily. The cofactor is Mg(2+). Requires Mn(2+) as cofactor.

It catalyses the reaction NAD(+) + (deoxyribonucleotide)n-3'-hydroxyl + 5'-phospho-(deoxyribonucleotide)m = (deoxyribonucleotide)n+m + AMP + beta-nicotinamide D-nucleotide.. Its function is as follows. DNA ligase that catalyzes the formation of phosphodiester linkages between 5'-phosphoryl and 3'-hydroxyl groups in double-stranded DNA using NAD as a coenzyme and as the energy source for the reaction. It is essential for DNA replication and repair of damaged DNA. This is DNA ligase from Staphylococcus aureus (strain MRSA252).